Consider the following 882-residue polypeptide: Alanine--tRNA ligase (882 aa).

Residues His-570, His-574, Cys-672, and His-676 each contribute to the Zn(2+) site.

The protein belongs to the class-II aminoacyl-tRNA synthetase family. It depends on Zn(2+) as a cofactor.

The protein localises to the cytoplasm. The enzyme catalyses tRNA(Ala) + L-alanine + ATP = L-alanyl-tRNA(Ala) + AMP + diphosphate. Its function is as follows. Catalyzes the attachment of alanine to tRNA(Ala) in a two-step reaction: alanine is first activated by ATP to form Ala-AMP and then transferred to the acceptor end of tRNA(Ala). Also edits incorrectly charged Ser-tRNA(Ala) and Gly-tRNA(Ala) via its editing domain. This Xanthomonas euvesicatoria pv. vesicatoria (strain 85-10) (Xanthomonas campestris pv. vesicatoria) protein is Alanine--tRNA ligase.